We begin with the raw amino-acid sequence, 40 residues long: Allophycocyanin alpha-B chain (40 aa).

Belongs to the phycobiliprotein family. Heterodimer of an alpha and a beta chain. Contains one covalently linked bilin chromophore.

Its subcellular location is the cellular thylakoid membrane. Light-harvesting photosynthetic bile pigment-protein from the phycobiliprotein complex. Allophycocyanin has a maximum absorption at approximately 650 nanometers. The sequence is that of Allophycocyanin alpha-B chain from Mastigocladus laminosus (Fischerella sp.).